Here is a 1183-residue protein sequence, read N- to C-terminus: Putative ATP-dependent RNA helicase PB1A10.06c (1183 aa).

Disordered stretches follow at residues 1-92 and 165-315; these read MGRL…KKRL and ETTT…RASR. Positions 60–81 are enriched in basic and acidic residues; sequence VPKEERQKRKQELKDQLLKENE. Composition is skewed to low complexity over residues 165–176 and 184–196; these read ETTTTKSSTAET and TRSG…STGT. A compositionally biased stretch (acidic residues) spans 224–251; it reads EDPEYDSAEEDYLSTDSEEFSEDSDNSS. Positions 252-270 are enriched in basic and acidic residues; it reads EENKDTNEPSTKDAEKTVP. A compositionally biased stretch (acidic residues) spans 292 to 308; the sequence is ENEDFDLETSEDDSSDD. Residues 408–585 enclose the Helicase ATP-binding domain; sequence MEQIFANDVV…KLLFSVPPPI (178 aa). 421-428 serves as a coordination point for ATP; it reads GATGSGKT. Residues 522 to 525 carry the DEAH box motif; it reads DEAH. In terms of domain architecture, Helicase C-terminal spans 611–831; sequence AFDKVCLIHK…SIVLQMKNMN (221 aa). Positions 673–683 are enriched in acidic residues; it reads EDLQSETEDID. Residues 673–696 form a disordered region; sequence EDLQSETEDIDQVPTSSSSSVTYD.

Belongs to the DEAD box helicase family. DEAH subfamily.

Its subcellular location is the nucleus. It is found in the nucleolus. It catalyses the reaction ATP + H2O = ADP + phosphate + H(+). The sequence is that of Putative ATP-dependent RNA helicase PB1A10.06c from Schizosaccharomyces pombe (strain 972 / ATCC 24843) (Fission yeast).